The primary structure comprises 396 residues: General transcription factor IIH subunit 2 (396 aa).

Positions His60–Val236 constitute a VWFA domain. At Tyr95 the chain carries Phosphotyrosine. A C4-type zinc finger spans residues Cys292 to Cys309.

It belongs to the GTF2H2 family. Component of the TFIID-containing RNA polymerase II pre-initiation complex that is composed of TBP and at least GTF2A1, GTF2A2, GTF2E1, GTF2E2, GTF2F1, GTF2H2, GTF2H3, GTF2H4, GTF2H5, GTF2B, TCEA1, ERCC2 and ERCC3. Component of the 7-subunit TFIIH core complex composed of XPB/ERCC3, XPD/ERCC2, GTF2H1, GTF2H2, GTF2H3, GTF2H4 and GTF2H5, which is active in NER. The core complex associates with the 3-subunit CDK-activating kinase (CAK) module composed of CCNH/cyclin H, CDK7 and MNAT1 to form the 10-subunit holoenzyme (holo-TFIIH) active in transcription. Interacts with XPB, XPD, GTF2H1 and GTF2H3.

The protein resides in the nucleus. Functionally, component of the general transcription and DNA repair factor IIH (TFIIH) core complex, which is involved in general and transcription-coupled nucleotide excision repair (NER) of damaged DNA and, when complexed to CAK, in RNA transcription by RNA polymerase II. In NER, TFIIH acts by opening DNA around the lesion to allow the excision of the damaged oligonucleotide and its replacement by a new DNA fragment. In transcription, TFIIH has an essential role in transcription initiation. When the pre-initiation complex (PIC) has been established, TFIIH is required for promoter opening and promoter escape. Phosphorylation of the C-terminal tail (CTD) of the largest subunit of RNA polymerase II by the kinase module CAK controls the initiation of transcription. The N-terminus of GTF2H2 interacts with and regulates XPD whereas an intact C-terminus is required for a successful escape of RNAP II form the promoter. In Rattus norvegicus (Rat), this protein is General transcription factor IIH subunit 2 (Gtf2h2).